Reading from the N-terminus, the 519-residue chain is Putative lipase ATG15 (519 aa).

The Cytoplasmic segment spans residues 1 to 5 (MYIPG). A helical; Signal-anchor for type II membrane protein transmembrane segment spans residues 6–26 (PLRLSSYLLPFLSSPSPPAQS). Residues 27-519 (SPDTRTISFK…CYKWEFGEWN (493 aa)) lie on the Lumenal side of the membrane. N-linked (GlcNAc...) asparagine glycans are attached at residues Asn-48, Asn-133, Asn-196, Asn-220, Asn-302, and Asn-309. The Charge relay system role is filled by Ser-318. Residue Asn-361 is glycosylated (N-linked (GlcNAc...) asparagine). The tract at residues 481-502 (RRGPKRQPGGEDPKHGGVPKPV) is disordered.

This sequence belongs to the AB hydrolase superfamily. Lipase family. As to quaternary structure, binds to both phosphatidylinositol (PI) and phosphatidylinositol 3,5-bisphosphate (PIP2).

Its subcellular location is the endosome. The protein localises to the multivesicular body membrane. It is found in the prevacuolar compartment membrane. The enzyme catalyses a triacylglycerol + H2O = a diacylglycerol + a fatty acid + H(+). Its function is as follows. Lipase which is essential for lysis of subvacuolar cytoplasm to vacuole targeted bodies and intravacuolar autophagic bodies. Involved in the lysis of intravacuolar multivesicular body (MVB) vesicles. The intravacuolar membrane disintegration by ATG15 is critical to life span extension. This Cryptococcus neoformans var. neoformans serotype D (strain B-3501A) (Filobasidiella neoformans) protein is Putative lipase ATG15 (ATG15).